The primary structure comprises 177 residues: NAD(P)H-quinone oxidoreductase subunit 6, chloroplastic (177 aa).

A run of 5 helical transmembrane segments spans residues 10–30 (ILLV…VLLT), 32–52 (PIYS…FYIP), 61–81 (AQLL…VMFM), 92–112 (FWTI…FSLI), and 152–172 (FYLP…GAIA).

It belongs to the complex I subunit 6 family. NDH is composed of at least 16 different subunits, 5 of which are encoded in the nucleus.

Its subcellular location is the plastid. The protein resides in the chloroplast thylakoid membrane. The catalysed reaction is a plastoquinone + NADH + (n+1) H(+)(in) = a plastoquinol + NAD(+) + n H(+)(out). The enzyme catalyses a plastoquinone + NADPH + (n+1) H(+)(in) = a plastoquinol + NADP(+) + n H(+)(out). Its function is as follows. NDH shuttles electrons from NAD(P)H:plastoquinone, via FMN and iron-sulfur (Fe-S) centers, to quinones in the photosynthetic chain and possibly in a chloroplast respiratory chain. The immediate electron acceptor for the enzyme in this species is believed to be plastoquinone. Couples the redox reaction to proton translocation, and thus conserves the redox energy in a proton gradient. The polypeptide is NAD(P)H-quinone oxidoreductase subunit 6, chloroplastic (ndhG) (Nuphar advena (Common spatterdock)).